We begin with the raw amino-acid sequence, 211 residues long: Ras-related protein Rab-38 (211 aa).

Residues Gly19, Val20, Gly21, Lys22, Thr23, Ser24, Ser35, Ser36, Tyr38, and Thr41 each contribute to the GTP site. Mg(2+) is bound at residue Thr23. A Switch 1 motif is present at residues 32–46; sequence QNFSSHYRATIGVDF. 2 residues coordinate Mg(2+): Thr41 and Asp65. Residues Gly68, Lys128, Asp130, Ala160, and Lys161 each contribute to the GTP site. Positions 68–81 match the Switch 2 motif; that stretch reads GQERFGNMTRVYYR. Cys205 carries S-palmitoyl cysteine lipidation. Cys208 carries S-geranylgeranyl cysteine lipidation.

This sequence belongs to the small GTPase superfamily. Rab family. As to quaternary structure, interacts with ANKRD27. Requires Mg(2+) as cofactor. Although at least one in vitro system can process and methylate the prenylated C-terminal, in an in vitro system that normally express Rab-38 and in vivo the prenylated C-terminal is not proteolytically processed and not methylated. Expressed in melanocytes.

Its subcellular location is the cell membrane. The protein localises to the melanosome. The protein resides in the cytoplasmic vesicle. It localises to the phagosome. It is found in the phagosome membrane. Its subcellular location is the melanosome membrane. It carries out the reaction GTP + H2O = GDP + phosphate + H(+). Regulated by guanine nucleotide exchange factors (GEFs) including the BLOC-3 complex composed of HPS1 and HPS4 which promote the exchange of bound GDP for free GTP. Regulated by GTPase activating proteins (GAPs) including SGSM2 which increase the GTP hydrolysis activity. Inhibited by GDP dissociation inhibitors (GDIs). The small GTPases Rab are key regulators of intracellular membrane trafficking, from the formation of transport vesicles to their fusion with membranes. Rabs cycle between an inactive GDP-bound form and an active GTP-bound form that is able to recruit to membranes different sets of downstream effectors directly responsible for vesicle formation, movement, tethering and fusion. RAB38 may be involved in melanosomal transport and docking. Involved in the proper sorting of TYRP1. Involved in peripheral melanosomal distribution of TYRP1 in melanocytes; the function, which probably is implicating vesicle-trafficking, includes cooperation with ANKRD27 and VAMP7. Plays a role in the maturation of phagosomes that engulf pathogens, such as S.aureus and M.tuberculosis. Plays an important role in the control of melanin production and melanosome biogenesis. In concert with RAB32, regulates the proper trafficking of melanogenic enzymes TYR, TYRP1 and DCT/TYRP2 to melanosomes in melanocytes. The protein is Ras-related protein Rab-38 of Homo sapiens (Human).